The following is a 135-amino-acid chain: Transcriptional regulator HosA (135 aa).

One can recognise an HTH marR-type domain in the interval arginine 4–asparagine 134. A DNA-binding region (H-T-H motif) is located at residues glutamine 48–asparagine 71.

Its function is as follows. Involved in the temperature-dependent positive control of flagellum-driven swimming motility and cellular aggregation. Regulates fliC expression by directly interacting with fliC promoter. This is Transcriptional regulator HosA (hosA) from Escherichia coli O127:H6 (strain E2348/69 / EPEC).